Consider the following 800-residue polypeptide: Chondroitin sulfate synthase 1 (800 aa).

Residues 1–7 (MAARGRR) are Cytoplasmic-facing. The chain crosses the membrane as a helical; Signal-anchor for type II membrane protein span at residues 8-28 (AWLSMLLGLVLGFVLASRLVL). At 29 to 800 (PRASELKRVG…GGSHGSARTA (772 aa)) the chain is on the lumenal side. Residues 36–66 (RVGPRRRPSPEGCRPGQEASQPGGARGDARG) form a disordered region. Residues Asn188 and Asn622 are each glycosylated (N-linked (GlcNAc...) asparagine). Positions 632 and 746 each coordinate a divalent metal cation.

Belongs to the chondroitin N-acetylgalactosaminyltransferase family. Requires Co(2+) as cofactor. The cofactor is Mn(2+). Cd(2+) is required as a cofactor.

It localises to the golgi apparatus. Its subcellular location is the golgi stack membrane. The protein resides in the secreted. The catalysed reaction is 3-O-(beta-D-GlcA-(1-&gt;3)-beta-D-GalNAc-(1-&gt;4)-beta-D-GlcA-(1-&gt;3)-beta-D-Gal-(1-&gt;3)-beta-D-Gal-(1-&gt;4)-beta-D-Xyl)-L-seryl-[protein] + UDP-N-acetyl-alpha-D-galactosamine = 3-O-(beta-D-GalNAc-(1-&gt;4)-beta-D-GlcA-(1-&gt;3)-beta-D-GalNAc-(1-&gt;4)-beta-D-GlcA-(1-&gt;3)-beta-D-Gal-(1-&gt;3)-beta-D-Gal-(1-&gt;4)-beta-D-Xyl)-L-seryl-[protein] + UDP + H(+). It catalyses the reaction 3-O-{beta-D-GlcA-(1-&gt;3)-[beta-D-GalNAc-(1-&gt;4)-beta-D-GlcA-(1-&gt;3)](n)-beta-D-GalNAc-(1-&gt;4)-beta-D-GlcA-(1-&gt;3)-beta-D-Gal-(1-&gt;3)-beta-D-Gal-(1-&gt;4)-beta-D-Xyl}-L-seryl-[protein] + UDP-N-acetyl-alpha-D-galactosamine = 3-O-{[beta-D-GalNAc-(1-&gt;4)-beta-D-GlcA-(1-&gt;3)](n+1)-beta-D-GalNAc-(1-&gt;4)-beta-D-GlcA-(1-&gt;3)-beta-D-Gal-(1-&gt;3)-beta-D-Gal-(1-&gt;4)-beta-D-Xyl}-L-seryl-[protein] + UDP + H(+). The enzyme catalyses 3-O-(beta-D-GalNAc-(1-&gt;4)-beta-D-GlcA-(1-&gt;3)-beta-D-Gal-(1-&gt;3)-beta-D-Gal-(1-&gt;4)-beta-D-Xyl)-L-seryl-[protein] + UDP-alpha-D-glucuronate = 3-O-(beta-D-GlcA-(1-&gt;3)-beta-D-GalNAc-(1-&gt;4)-beta-D-GlcA-(1-&gt;3)-beta-D-Gal-(1-&gt;3)-beta-D-Gal-(1-&gt;4)-beta-D-Xyl)-L-seryl-[protein] + UDP + H(+). It carries out the reaction 3-O-{[beta-D-GalNAc-(1-&gt;4)-beta-D-GlcA-(1-&gt;3)](n)-beta-D-GalNAc-(1-&gt;4)-beta-D-GlcA-(1-&gt;3)-beta-D-Gal-(1-&gt;3)-beta-D-Gal-(1-&gt;4)-beta-D-Xyl}-L-seryl-[protein] + UDP-alpha-D-glucuronate = 3-O-{beta-D-GlcA-(1-&gt;3)-[beta-D-GalNAc-(1-&gt;4)-beta-D-GlcA-(1-&gt;3)](n)-beta-D-GalNAc-(1-&gt;4)-beta-D-GlcA-(1-&gt;3)-beta-D-Gal-(1-&gt;3)-beta-D-Gal-(1-&gt;4)-beta-D-Xyl}-L-seryl-[protein] + UDP + H(+). Functionally, has both beta-1,3-glucuronic acid and beta-1,4-N-acetylgalactosamine transferase activity. Transfers glucuronic acid (GlcUA) from UDP-GlcUA and N-acetylgalactosamine (GalNAc) from UDP-GalNAc to the non-reducing end of the elongating chondroitin polymer. Involved in the negative control of osteogenesis likely through the modulation of NOTCH signaling. This is Chondroitin sulfate synthase 1 (Chsy1) from Mus musculus (Mouse).